A 296-amino-acid polypeptide reads, in one-letter code: N-acetylmuramic acid 6-phosphate etherase 2 (296 aa).

An SIS domain is found at 55 to 218; sequence IIKSFNQGGR…STISMIGIGK (164 aa). Residue Glu-83 is the Proton donor of the active site. Glu-114 is an active-site residue.

The protein belongs to the GCKR-like family. MurNAc-6-P etherase subfamily. In terms of assembly, homodimer.

The catalysed reaction is N-acetyl-D-muramate 6-phosphate + H2O = N-acetyl-D-glucosamine 6-phosphate + (R)-lactate. It participates in amino-sugar metabolism; N-acetylmuramate degradation. Its function is as follows. Specifically catalyzes the cleavage of the D-lactyl ether substituent of MurNAc 6-phosphate, producing GlcNAc 6-phosphate and D-lactate. The protein is N-acetylmuramic acid 6-phosphate etherase 2 of Enterococcus faecalis (strain ATCC 700802 / V583).